A 361-amino-acid polypeptide reads, in one-letter code: Peptide chain release factor 1 (361 aa).

Gln235 bears the N5-methylglutamine mark.

Belongs to the prokaryotic/mitochondrial release factor family. Post-translationally, methylated by PrmC. Methylation increases the termination efficiency of RF1.

It localises to the cytoplasm. Its function is as follows. Peptide chain release factor 1 directs the termination of translation in response to the peptide chain termination codons UAG and UAA. The polypeptide is Peptide chain release factor 1 (Chlamydia felis (strain Fe/C-56) (Chlamydophila felis)).